The sequence spans 344 residues: MGALRVLRYVSMIWRPELGSCARQRDAGFGTEARRPSQPHRSSKHKDLVEDQPFPGLLRTENLGLEELAHVLRAAVVDQKGPLVTLNKPQGLPVTGRPGELTLLSVLPQLSQALGLEHQELQVVRAPGKEASGLVLLSSCPQTASRLQKFFIHSRRAQRPTATYCAVTDGIPEPSEGTVCMPLKMEQMNDVDLAVPVMSPSRKDIQEGVKRTLSRFHVMATGRGCALVQLQPLTVFPNQLQVHMALQLCPILGDHTYAARVGTVLGQRFLWPAETTKPQRQVLDEALLRHLRLSPSQVAQMPLHLHLHRLLLPGTGSRDPPSELLAPLPPYFSRTLQCLRLSQQ.

Residues 1–36 constitute a mitochondrion transit peptide; sequence MGALRVLRYVSMIWRPELGSCARQRDAGFGTEARRP. Residues 25-53 are disordered; it reads RDAGFGTEARRPSQPHRSSKHKDLVEDQP.

This sequence belongs to the pseudouridine synthase RluA family. In terms of assembly, forms a regulatory protein-RNA complex, consisting of RCC1L, NGRN, RPUSD3, RPUSD4, TRUB2, FASTKD2 and 16S mt-rRNA.

Its subcellular location is the mitochondrion matrix. It carries out the reaction a uridine in mRNA = a pseudouridine in mRNA. In terms of biological role, catalyzes uridine to pseudouridine isomerization (pseudouridylation) of specific mitochondrial mRNAs (mt-mRNAs), a post-transcriptional modification necessary for their translation. Acts at position 390 in COXI mt-mRNA and at position 697-699 in mitochondrial COXIII mt-mRNA. As a component of a functional protein-RNA module, consisting of RCC1L, NGRN, RPUSD3, RPUSD4, TRUB2, FASTKD2 and 16S mitochondrial ribosomal RNA (16S mt-rRNA), controls 16S mt-rRNA abundance and may play a role in mitochondrial ribosome biogenesis. The chain is Mitochondrial mRNA pseudouridine synthase Rpusd3 (Rpusd3) from Mus musculus (Mouse).